The following is a 228-amino-acid chain: Prolactin-2B1 (228 aa).

The signal sequence occupies residues 1–31 (MLLSLTQMLSSRASSRLFLVSYLLLWENVVS). 2 cysteine pairs are disulfide-bonded: cysteine 89/cysteine 194 and cysteine 203/cysteine 228.

It belongs to the somatotropin/prolactin family. As to expression, expressed specifically in placenta. Expressed at high levels in trophoblast cells from both junctional and labyrinth zones of the chorioallantoic placenta the last week of gestation.

The protein localises to the secreted. The polypeptide is Prolactin-2B1 (Prl2b1) (Mus musculus (Mouse)).